The following is a 508-amino-acid chain: Glycerol kinase (508 aa).

Thr-15 provides a ligand contact to ADP. Residues Thr-15, Ser-16, and Ser-17 each contribute to the ATP site. Position 15 (Thr-15) interacts with sn-glycerol 3-phosphate. Arg-19 contacts ADP. Positions 85, 86, 138, and 251 each coordinate sn-glycerol 3-phosphate. Glycerol is bound by residues Arg-85, Glu-86, Tyr-138, Asp-251, and Gln-252. Residues Thr-273, Gly-317, and Gly-419 each contribute to the ADP site. Positions 273, 317, and 419 each coordinate ATP.

This sequence belongs to the FGGY kinase family.

It carries out the reaction glycerol + ATP = sn-glycerol 3-phosphate + ADP + H(+). The protein operates within polyol metabolism; glycerol degradation via glycerol kinase pathway; sn-glycerol 3-phosphate from glycerol: step 1/1. With respect to regulation, inhibited by fructose 1,6-bisphosphate (FBP). In terms of biological role, key enzyme in the regulation of glycerol uptake and metabolism. Catalyzes the phosphorylation of glycerol to yield sn-glycerol 3-phosphate. The polypeptide is Glycerol kinase (Mycoplasma genitalium (strain ATCC 33530 / DSM 19775 / NCTC 10195 / G37) (Mycoplasmoides genitalium)).